A 183-amino-acid chain; its full sequence is Capsid protein (183 aa).

Residues 143–183 (LPETTVIRRRGRSPRRRTPSPRRRRSQSPRRRRSQSREPQC) form a disordered region. Residues 149–176 (IRRRGRSPRRRTPSPRRRRSQSPRRRRS) are compositionally biased toward basic residues. Residues S155, S162, and S170 each carry the phosphoserine; by host modification. The 1; half-length repeat unit spans residues 155-161 (SPRRRTP). The tract at residues 155 to 177 (SPRRRTPSPRRRRSQSPRRRRSQ) is 3 X 8 AA repeats of S-P-R-R-R-[PR]-S-Q. The Bipartite nuclear localization signal motif lies at 158–175 (RRTPSPRRRRSQSPRRRR). Tandem repeats lie at residues 162 to 169 (SPRRRRSQ) and 170 to 177 (SPRRRRSQ). Positions 177–183 (QSREPQC) are RNA binding.

It belongs to the orthohepadnavirus core antigen family. In terms of assembly, homodimerizes, then multimerizes. Interacts with cytosol exposed regions of viral L glycoprotein present in the reticulum-to-Golgi compartment. Interacts with human FLNB. Phosphorylated form interacts with host importin alpha; this interaction depends on the exposure of the NLS, which itself depends upon genome maturation and/or phosphorylation of the capsid protein. Interacts with host NUP153. In terms of processing, phosphorylated by host SRPK1, SRPK2, and maybe protein kinase C or GAPDH. Phosphorylation is critical for pregenomic RNA packaging. Protein kinase C phosphorylation is stimulated by HBx protein and may play a role in transport of the viral genome to the nucleus at the late step during the viral replication cycle.

The protein localises to the virion. Its subcellular location is the host cytoplasm. Functionally, self assembles to form an icosahedral capsid. Most capsids appear to be large particles with an icosahedral symmetry of T=4 and consist of 240 copies of capsid protein, though a fraction forms smaller T=3 particles consisting of 180 capsid proteins. Entering capsids are transported along microtubules to the nucleus. Phosphorylation of the capsid is thought to induce exposure of nuclear localization signal in the C-terminal portion of the capsid protein that allows binding to the nuclear pore complex via the importin (karyopherin-) alpha and beta. Capsids are imported in intact form through the nuclear pore into the nuclear basket, where it probably binds NUP153. Only capsids that contain the mature viral genome can release the viral DNA and capsid protein into the nucleoplasm. Immature capsids get stuck in the basket. Capsids encapsulate the pre-genomic RNA and the P protein. Pre-genomic RNA is reverse-transcribed into DNA while the capsid is still in the cytoplasm. The capsid can then either be directed to the nucleus, providing more genomes for transcription, or bud through the endoplasmic reticulum to provide new virions. This chain is Capsid protein, found in Hepatitis B virus genotype B1 (isolate Japan/Ry30/2002) (HBV-B).